The sequence spans 242 residues: Protein FsrB (242 aa).

5 consecutive transmembrane segments (helical) span residues 29–49 (LTVYFSGLFNFLMILILSVLF), 52–72 (LSETFIVYVVLIFLRPVAGGW), 78–95 (WLCRLESIVIYVAIPFVL), 100–120 (VSLPFIYKILLICLLVVLFYW), and 160–180 (KIASVILYGLVIQGLMILPVT).

Belongs to the AgrB family.

It is found in the cell membrane. In terms of biological role, may be involved in the proteolytic processing of a quorum sensing system signal molecule precursor required for the regulation of the virulence genes for gelatinase (gelE) and a serine protease (sprE). The sequence is that of Protein FsrB (fsrB) from Enterococcus faecalis (strain ATCC 47077 / OG1RF).